A 421-amino-acid polypeptide reads, in one-letter code: ATP-dependent RNA helicase RhlB (421 aa).

A Q motif motif is present at residues 9–37 (QKFSDFALHPQVVEALEKKGFYNCTPIQA). The Helicase ATP-binding domain occupies 40-219 (LPLTLAGRDV…FEQMNNAEYV (180 aa)). An ATP-binding site is contributed by 53–60 (AQTGTGKT). Positions 165–168 (DEAD) match the DEAD box motif. In terms of domain architecture, Helicase C-terminal spans 245–390 (RLLQTLIEEE…VSKYNPEALM (146 aa)). A disordered region spans residues 396-421 (PLRLTRSRPGNGPRRAGAPRNRRRSG). Residues 402–414 (SRPGNGPRRAGAP) are compositionally biased toward low complexity.

It belongs to the DEAD box helicase family. RhlB subfamily. In terms of assembly, component of the RNA degradosome, which is a multiprotein complex involved in RNA processing and mRNA degradation.

The protein resides in the cytoplasm. It catalyses the reaction ATP + H2O = ADP + phosphate + H(+). Functionally, DEAD-box RNA helicase involved in RNA degradation. Has RNA-dependent ATPase activity and unwinds double-stranded RNA. This is ATP-dependent RNA helicase RhlB from Salmonella agona (strain SL483).